The sequence spans 199 residues: Recombination protein RecR (199 aa).

Residues 58–73 (CSICNNITDVDPCTYC) form a C4-type zinc finger. Positions 81–176 (QVICVVEEPT…RVTRIATGVP (96 aa)) constitute a Toprim domain.

It belongs to the RecR family.

May play a role in DNA repair. It seems to be involved in an RecBC-independent recombinational process of DNA repair. It may act with RecF and RecO. This Koribacter versatilis (strain Ellin345) protein is Recombination protein RecR.